A 393-amino-acid polypeptide reads, in one-letter code: Lipid-A-disaccharide synthase (393 aa).

The protein belongs to the LpxB family.

The enzyme catalyses a lipid X + a UDP-2-N,3-O-bis[(3R)-3-hydroxyacyl]-alpha-D-glucosamine = a lipid A disaccharide + UDP + H(+). It participates in bacterial outer membrane biogenesis; LPS lipid A biosynthesis. Its function is as follows. Condensation of UDP-2,3-diacylglucosamine and 2,3-diacylglucosamine-1-phosphate to form lipid A disaccharide, a precursor of lipid A, a phosphorylated glycolipid that anchors the lipopolysaccharide to the outer membrane of the cell. The protein is Lipid-A-disaccharide synthase of Granulibacter bethesdensis (strain ATCC BAA-1260 / CGDNIH1).